A 94-amino-acid polypeptide reads, in one-letter code: DNA-directed RNA polymerase subunit Rpo11 (94 aa).

The protein belongs to the archaeal Rpo11/eukaryotic RPB11/RPC19 RNA polymerase subunit family. Part of the RNA polymerase complex.

It is found in the cytoplasm. The catalysed reaction is RNA(n) + a ribonucleoside 5'-triphosphate = RNA(n+1) + diphosphate. Functionally, DNA-dependent RNA polymerase (RNAP) catalyzes the transcription of DNA into RNA using the four ribonucleoside triphosphates as substrates. In Natronomonas pharaonis (strain ATCC 35678 / DSM 2160 / CIP 103997 / JCM 8858 / NBRC 14720 / NCIMB 2260 / Gabara) (Halobacterium pharaonis), this protein is DNA-directed RNA polymerase subunit Rpo11.